The chain runs to 102 residues: Chorion protein S15 (102 aa).

An N-terminal signal peptide occupies residues 1–18 (MKFLIAFVAIAFFACVSA).

The protein belongs to the chorion protein S15/S18 family.

Its subcellular location is the secreted. Functionally, chorion membrane (egg shell) protein; plays a role in protecting the egg from the environment. The sequence is that of Chorion protein S15 (Cp15) from Drosophila grimshawi (Hawaiian fruit fly).